A 229-amino-acid chain; its full sequence is Transmembrane protein 217 (229 aa).

Residues methionine 13–glutamate 33 form a helical membrane-spanning segment. A glycan (N-linked (GlcNAc...) asparagine) is linked at asparagine 39. 3 helical membrane-spanning segments follow: residues isoleucine 67–tyrosine 87, leucine 94–leucine 114, and tryptophan 129–tyrosine 149. Asparagine 156 carries an N-linked (GlcNAc...) asparagine glycan.

Its subcellular location is the membrane. The protein is Transmembrane protein 217 (TMEM217) of Homo sapiens (Human).